Consider the following 602-residue polypeptide: Elongation factor 4 (602 aa).

Positions 7–189 (SKIRNFCIIA…AIVRRVPPPQ (183 aa)) constitute a tr-type G domain. Residues 19–24 (DHGKST) and 136–139 (NKVD) contribute to the GTP site.

It belongs to the TRAFAC class translation factor GTPase superfamily. Classic translation factor GTPase family. LepA subfamily.

The protein resides in the cell inner membrane. It catalyses the reaction GTP + H2O = GDP + phosphate + H(+). Functionally, required for accurate and efficient protein synthesis under certain stress conditions. May act as a fidelity factor of the translation reaction, by catalyzing a one-codon backward translocation of tRNAs on improperly translocated ribosomes. Back-translocation proceeds from a post-translocation (POST) complex to a pre-translocation (PRE) complex, thus giving elongation factor G a second chance to translocate the tRNAs correctly. Binds to ribosomes in a GTP-dependent manner. This Prochlorococcus marinus (strain MIT 9215) protein is Elongation factor 4.